The chain runs to 181 residues: Inorganic pyrophosphatase 2 (181 aa).

Residues Lys-30, Arg-44, and Tyr-56 each coordinate substrate. Residues Asp-66, Asp-71, and Asp-103 each coordinate Mg(2+). Residue Tyr-142 participates in substrate binding.

Belongs to the PPase family. As to quaternary structure, homohexamer. It depends on Mg(2+) as a cofactor.

It is found in the cytoplasm. The enzyme catalyses diphosphate + H2O = 2 phosphate + H(+). Its function is as follows. Catalyzes the hydrolysis of inorganic pyrophosphate (PPi) forming two phosphate ions. The protein is Inorganic pyrophosphatase 2 of Pseudomonas syringae pv. tomato (strain ATCC BAA-871 / DC3000).